Consider the following 341-residue polypeptide: Methionine import ATP-binding protein MetN (341 aa).

One can recognise an ABC transporter domain in the interval 2–241 (IELNQIVKRY…PQHDVTKRFV (240 aa)). ATP is bound at residue 38–45 (GFSGAGKS).

It belongs to the ABC transporter superfamily. Methionine importer (TC 3.A.1.24) family. In terms of assembly, the complex is composed of two ATP-binding proteins (MetN), two transmembrane proteins (MetI) and a solute-binding protein (MetQ).

It localises to the cell membrane. It carries out the reaction L-methionine(out) + ATP + H2O = L-methionine(in) + ADP + phosphate + H(+). The catalysed reaction is D-methionine(out) + ATP + H2O = D-methionine(in) + ADP + phosphate + H(+). Functionally, part of the ABC transporter complex MetNIQ involved in methionine import. Responsible for energy coupling to the transport system. The protein is Methionine import ATP-binding protein MetN of Staphylococcus saprophyticus subsp. saprophyticus (strain ATCC 15305 / DSM 20229 / NCIMB 8711 / NCTC 7292 / S-41).